A 483-amino-acid polypeptide reads, in one-letter code: Altronate oxidoreductase (483 aa).

Residue 18–29 (IIQFGEGNFLRA) participates in NAD(+) binding.

It belongs to the mannitol dehydrogenase family. UxaB subfamily.

The catalysed reaction is D-altronate + NAD(+) = keto-D-tagaturonate + NADH + H(+). It participates in carbohydrate metabolism; pentose and glucuronate interconversion. The sequence is that of Altronate oxidoreductase from Yersinia pestis.